Reading from the N-terminus, the 181-residue chain is Protein GrpE (181 aa).

The segment covering 1–10 has biased composition (polar residues); the sequence is MENTQENPAT. The tract at residues 1–33 is disordered; that stretch reads MENTQENPATPSAEDIGSEKQAAQGAAPAAEAA. The segment covering 21–33 has biased composition (low complexity); it reads QAAQGAAPAAEAA.

The protein belongs to the GrpE family. In terms of assembly, homodimer.

It is found in the cytoplasm. Its function is as follows. Participates actively in the response to hyperosmotic and heat shock by preventing the aggregation of stress-denatured proteins, in association with DnaK and GrpE. It is the nucleotide exchange factor for DnaK and may function as a thermosensor. Unfolded proteins bind initially to DnaJ; upon interaction with the DnaJ-bound protein, DnaK hydrolyzes its bound ATP, resulting in the formation of a stable complex. GrpE releases ADP from DnaK; ATP binding to DnaK triggers the release of the substrate protein, thus completing the reaction cycle. Several rounds of ATP-dependent interactions between DnaJ, DnaK and GrpE are required for fully efficient folding. This chain is Protein GrpE, found in Burkholderia cenocepacia (strain ATCC BAA-245 / DSM 16553 / LMG 16656 / NCTC 13227 / J2315 / CF5610) (Burkholderia cepacia (strain J2315)).